Here is a 275-residue protein sequence, read N- to C-terminus: Formamidopyrimidine-DNA glycosylase (275 aa).

Pro-2 serves as the catalytic Schiff-base intermediate with DNA. Catalysis depends on Glu-3, which acts as the Proton donor. The Proton donor; for beta-elimination activity role is filled by Lys-59. DNA is bound by residues His-92, Arg-111, and Lys-155. The FPG-type zinc-finger motif lies at 240-274 (YVYGQTGEPCRRCGHEIEKMKLGGRGTHYCPHCQQ). Arg-264 acts as the Proton donor; for delta-elimination activity in catalysis.

The protein belongs to the FPG family. Monomer. Zn(2+) is required as a cofactor.

It catalyses the reaction Hydrolysis of DNA containing ring-opened 7-methylguanine residues, releasing 2,6-diamino-4-hydroxy-5-(N-methyl)formamidopyrimidine.. It carries out the reaction 2'-deoxyribonucleotide-(2'-deoxyribose 5'-phosphate)-2'-deoxyribonucleotide-DNA = a 3'-end 2'-deoxyribonucleotide-(2,3-dehydro-2,3-deoxyribose 5'-phosphate)-DNA + a 5'-end 5'-phospho-2'-deoxyribonucleoside-DNA + H(+). Functionally, involved in base excision repair of DNA damaged by oxidation or by mutagenic agents. Acts as a DNA glycosylase that recognizes and removes damaged bases. Has a preference for oxidized purines, such as 7,8-dihydro-8-oxoguanine (8-oxoG). Has AP (apurinic/apyrimidinic) lyase activity and introduces nicks in the DNA strand. Cleaves the DNA backbone by beta-delta elimination to generate a single-strand break at the site of the removed base with both 3'- and 5'-phosphates. This chain is Formamidopyrimidine-DNA glycosylase, found in Exiguobacterium sp. (strain ATCC BAA-1283 / AT1b).